The sequence spans 151 residues: Cytochrome c-type biogenesis protein CcmE (151 aa).

The Cytoplasmic portion of the chain corresponds to 1–8 (MNPLRKKR). Residues 9–29 (LLIILAILVGVGIAVGLALSA) traverse the membrane as a helical; Signal-anchor for type II membrane protein segment. The Periplasmic segment spans residues 30–151 (LKENINLFYT…QSAPTPAKEG (122 aa)). Heme contacts are provided by His124 and Tyr128. The tract at residues 131 to 151 (PEVTKALKDSGQSAPTPAKEG) is disordered.

It belongs to the CcmE/CycJ family.

Its subcellular location is the cell inner membrane. In terms of biological role, heme chaperone required for the biogenesis of c-type cytochromes. Transiently binds heme delivered by CcmC and transfers the heme to apo-cytochromes in a process facilitated by CcmF and CcmH. This is Cytochrome c-type biogenesis protein CcmE from Pseudomonas fluorescens (strain ATCC BAA-477 / NRRL B-23932 / Pf-5).